A 515-amino-acid chain; its full sequence is Probable coatomer subunit delta (515 aa).

Residues 161 to 180 show a composition bias toward basic and acidic residues; sequence AKQAMAEKAKELKRAQKEAL. The interval 161–231 is disordered; that stretch reads AKQAMAEKAK…GGKALKLGGK (71 aa). A compositionally biased stretch (low complexity) spans 187–198; it reads SYQSSTGISSSS. The MHD domain maps to 276 to 515; sequence REVVHVRTEE…TFNSENFEIV (240 aa).

Belongs to the adaptor complexes medium subunit family. Delta-COP subfamily. Oligomeric complex that consists of at least the alpha, beta, beta', gamma, delta, epsilon and zeta subunits.

It localises to the cytoplasm. It is found in the golgi apparatus membrane. Its subcellular location is the cytoplasmic vesicle. The protein localises to the COPI-coated vesicle membrane. Its function is as follows. The coatomer is a cytosolic protein complex that binds to dilysine motifs and reversibly associates with Golgi non-clathrin-coated vesicles, which further mediate biosynthetic protein transport from the ER, via the Golgi up to the trans Golgi network. Coatomer complex is required for budding from Golgi membranes, and is essential for the retrograde Golgi-to-ER transport of dilysine-tagged proteins. The protein is Probable coatomer subunit delta of Caenorhabditis elegans.